We begin with the raw amino-acid sequence, 203 residues long: Outer-membrane lipoprotein LolB (203 aa).

An N-terminal signal peptide occupies residues 1-16 (MKTFLPCLFFLLILVG). Cys-17 carries the N-palmitoyl cysteine lipid modification. The S-diacylglycerol cysteine moiety is linked to residue Cys-17.

It belongs to the LolB family. Monomer.

The protein localises to the cell outer membrane. In terms of biological role, plays a critical role in the incorporation of lipoproteins in the outer membrane after they are released by the LolA protein. This Psychromonas ingrahamii (strain DSM 17664 / CCUG 51855 / 37) protein is Outer-membrane lipoprotein LolB.